Here is a 239-residue protein sequence, read N- to C-terminus: 1-(5-phosphoribosyl)-5-[(5-phosphoribosylamino)methylideneamino] imidazole-4-carboxamide isomerase (239 aa).

Catalysis depends on D8, which acts as the Proton acceptor. D129 serves as the catalytic Proton donor.

Belongs to the HisA/HisF family.

It localises to the cytoplasm. The catalysed reaction is 1-(5-phospho-beta-D-ribosyl)-5-[(5-phospho-beta-D-ribosylamino)methylideneamino]imidazole-4-carboxamide = 5-[(5-phospho-1-deoxy-D-ribulos-1-ylimino)methylamino]-1-(5-phospho-beta-D-ribosyl)imidazole-4-carboxamide. Its pathway is amino-acid biosynthesis; L-histidine biosynthesis; L-histidine from 5-phospho-alpha-D-ribose 1-diphosphate: step 4/9. The sequence is that of 1-(5-phosphoribosyl)-5-[(5-phosphoribosylamino)methylideneamino] imidazole-4-carboxamide isomerase from Bacillus mycoides (strain KBAB4) (Bacillus weihenstephanensis).